Here is a 158-residue protein sequence, read N- to C-terminus: S-ribosylhomocysteine lyase (158 aa).

Residues His-56, His-60, and Cys-125 each contribute to the Fe cation site.

This sequence belongs to the LuxS family. Homodimer. Requires Fe cation as cofactor.

The catalysed reaction is S-(5-deoxy-D-ribos-5-yl)-L-homocysteine = (S)-4,5-dihydroxypentane-2,3-dione + L-homocysteine. Involved in the synthesis of autoinducer 2 (AI-2) which is secreted by bacteria and is used to communicate both the cell density and the metabolic potential of the environment. The regulation of gene expression in response to changes in cell density is called quorum sensing. Catalyzes the transformation of S-ribosylhomocysteine (RHC) to homocysteine (HC) and 4,5-dihydroxy-2,3-pentadione (DPD). The polypeptide is S-ribosylhomocysteine lyase (Leuconostoc mesenteroides subsp. mesenteroides (strain ATCC 8293 / DSM 20343 / BCRC 11652 / CCM 1803 / JCM 6124 / NCDO 523 / NBRC 100496 / NCIMB 8023 / NCTC 12954 / NRRL B-1118 / 37Y)).